Consider the following 570-residue polypeptide: Proline--tRNA ligase (570 aa).

The protein belongs to the class-II aminoacyl-tRNA synthetase family. ProS type 1 subfamily. Homodimer.

The protein resides in the cytoplasm. The enzyme catalyses tRNA(Pro) + L-proline + ATP = L-prolyl-tRNA(Pro) + AMP + diphosphate. Its function is as follows. Catalyzes the attachment of proline to tRNA(Pro) in a two-step reaction: proline is first activated by ATP to form Pro-AMP and then transferred to the acceptor end of tRNA(Pro). As ProRS can inadvertently accommodate and process non-cognate amino acids such as alanine and cysteine, to avoid such errors it has two additional distinct editing activities against alanine. One activity is designated as 'pretransfer' editing and involves the tRNA(Pro)-independent hydrolysis of activated Ala-AMP. The other activity is designated 'posttransfer' editing and involves deacylation of mischarged Ala-tRNA(Pro). The misacylated Cys-tRNA(Pro) is not edited by ProRS. The polypeptide is Proline--tRNA ligase (Clostridium beijerinckii (strain ATCC 51743 / NCIMB 8052) (Clostridium acetobutylicum)).